The primary structure comprises 271 residues: MTERVRVAITGGSGRMGRTLIEAAKQNDAILLGAAIERAGSTLMGVDAGELAGVGAMNVAITDSLDKAVDDFDVLIDFTSPEASVIHTDWCAKHGKAIVIGTTGFNHAQKEQISAYSEQVPIVMAPNMAVGVNLMWKLLEVAAEVMGHYSDIEIIEGHHRYKKDAPSGTALKMGEVIAETLGRDLEKCAVYGREGITGERDRETIGFATVRAGDIVGEHTALFADIGERLEITHKASSRMTFANGAMRAASWLSAQGSGLYDMQQVLGLKE.

NAD(+) contacts are provided by residues 11-16 and Glu-37; that span reads GGSGRM. Arg-38 serves as a coordination point for NADP(+). NAD(+) is bound by residues 101 to 103 and 125 to 128; these read GTT and APNM. Catalysis depends on His-158, which acts as the Proton donor/acceptor. (S)-2,3,4,5-tetrahydrodipicolinate is bound at residue His-159. Lys-162 functions as the Proton donor in the catalytic mechanism. (S)-2,3,4,5-tetrahydrodipicolinate is bound at residue 168 to 169; sequence GT.

Belongs to the DapB family.

The protein resides in the cytoplasm. The enzyme catalyses (S)-2,3,4,5-tetrahydrodipicolinate + NAD(+) + H2O = (2S,4S)-4-hydroxy-2,3,4,5-tetrahydrodipicolinate + NADH + H(+). It carries out the reaction (S)-2,3,4,5-tetrahydrodipicolinate + NADP(+) + H2O = (2S,4S)-4-hydroxy-2,3,4,5-tetrahydrodipicolinate + NADPH + H(+). The protein operates within amino-acid biosynthesis; L-lysine biosynthesis via DAP pathway; (S)-tetrahydrodipicolinate from L-aspartate: step 4/4. Catalyzes the conversion of 4-hydroxy-tetrahydrodipicolinate (HTPA) to tetrahydrodipicolinate. This is 4-hydroxy-tetrahydrodipicolinate reductase from Shewanella piezotolerans (strain WP3 / JCM 13877).